The sequence spans 343 residues: Putative ALA-interacting subunit 2 (343 aa).

The helical transmembrane segment at 43–63 threads the bilayer; that stretch reads PISVITVFMLMGFVFIPIGLI. N-linked (GlcNAc...) asparagine glycosylation is found at Asn103, Asn178, Asn191, and Asn218. A helical membrane pass occupies residues 301–321; sequence FLGITYLVVGSSSIVISIIFM.

This sequence belongs to the CDC50/LEM3 family. Expressed in roots, leaves, stems, flowers and siliques.

The protein resides in the membrane. In Arabidopsis thaliana (Mouse-ear cress), this protein is Putative ALA-interacting subunit 2 (ALIS2).